A 209-amino-acid polypeptide reads, in one-letter code: Kynurenine formamidase (209 aa).

W19 contributes to the substrate binding site. Zn(2+)-binding residues include H49, H53, and D55. H59 serves as the catalytic Proton donor/acceptor. The Zn(2+) site is built by H160 and E172.

This sequence belongs to the Cyclase 1 superfamily. KynB family. In terms of assembly, homodimer. Zn(2+) is required as a cofactor.

It catalyses the reaction N-formyl-L-kynurenine + H2O = L-kynurenine + formate + H(+). It functions in the pathway amino-acid degradation; L-tryptophan degradation via kynurenine pathway; L-kynurenine from L-tryptophan: step 2/2. In terms of biological role, catalyzes the hydrolysis of N-formyl-L-kynurenine to L-kynurenine, the second step in the kynurenine pathway of tryptophan degradation. This chain is Kynurenine formamidase, found in Ralstonia pickettii (strain 12J).